A 170-amino-acid polypeptide reads, in one-letter code: Flavin reductase (NADPH) (170 aa).

This sequence belongs to the non-flavoprotein flavin reductase family.

It catalyses the reaction reduced riboflavin + NADP(+) = riboflavin + NADPH + 2 H(+). Catalyzes the NADH-dependent reduction of FAD to provide FADH2 for the halogenase RebH. The protein is Flavin reductase (NADPH) (rbmH) of Lentzea aerocolonigenes (Lechevalieria aerocolonigenes).